We begin with the raw amino-acid sequence, 189 residues long: Pyridoxal 5'-phosphate synthase subunit PdxT (189 aa).

Residue 46-48 (GES) coordinates L-glutamine. The active-site Nucleophile is the Cys-78. Residues Arg-107 and 136–137 (IR) contribute to the L-glutamine site. Active-site charge relay system residues include His-173 and Glu-175.

The protein belongs to the glutaminase PdxT/SNO family. As to quaternary structure, in the presence of PdxS, forms a dodecamer of heterodimers. Only shows activity in the heterodimer.

It carries out the reaction aldehydo-D-ribose 5-phosphate + D-glyceraldehyde 3-phosphate + L-glutamine = pyridoxal 5'-phosphate + L-glutamate + phosphate + 3 H2O + H(+). The catalysed reaction is L-glutamine + H2O = L-glutamate + NH4(+). Its pathway is cofactor biosynthesis; pyridoxal 5'-phosphate biosynthesis. Functionally, catalyzes the hydrolysis of glutamine to glutamate and ammonia as part of the biosynthesis of pyridoxal 5'-phosphate. The resulting ammonia molecule is channeled to the active site of PdxS. The sequence is that of Pyridoxal 5'-phosphate synthase subunit PdxT from Roseiflexus castenholzii (strain DSM 13941 / HLO8).